We begin with the raw amino-acid sequence, 214 residues long: Putative 3-methyladenine DNA glycosylase (214 aa).

This sequence belongs to the DNA glycosylase MPG family.

This chain is Putative 3-methyladenine DNA glycosylase, found in Gloeobacter violaceus (strain ATCC 29082 / PCC 7421).